Reading from the N-terminus, the 125-residue chain is Small ribosomal subunit protein uS12 (125 aa).

The residue at position 89 (D89) is a 3-methylthioaspartic acid. The tract at residues 105 to 125 is disordered; sequence AGVKDRKQARSKYGAKRPKAA. Over residues 113 to 125 the composition is skewed to basic residues; sequence ARSKYGAKRPKAA.

The protein belongs to the universal ribosomal protein uS12 family. Part of the 30S ribosomal subunit. Contacts proteins S8 and S17. May interact with IF1 in the 30S initiation complex.

Functionally, with S4 and S5 plays an important role in translational accuracy. Interacts with and stabilizes bases of the 16S rRNA that are involved in tRNA selection in the A site and with the mRNA backbone. Located at the interface of the 30S and 50S subunits, it traverses the body of the 30S subunit contacting proteins on the other side and probably holding the rRNA structure together. The combined cluster of proteins S8, S12 and S17 appears to hold together the shoulder and platform of the 30S subunit. The polypeptide is Small ribosomal subunit protein uS12 (Methylobacillus flagellatus (strain ATCC 51484 / DSM 6875 / VKM B-1610 / KT)).